A 461-amino-acid polypeptide reads, in one-letter code: Bifunctional protein GlmU (461 aa).

The pyrophosphorylase stretch occupies residues 1-229 (MNKYVVILAA…FSESLGVNDR (229 aa)). UDP-N-acetyl-alpha-D-glucosamine is bound by residues 8 to 11 (LAAG), K22, Q72, and 77 to 78 (GT). D102 is a Mg(2+) binding site. 4 residues coordinate UDP-N-acetyl-alpha-D-glucosamine: G139, E154, N169, and N227. A Mg(2+)-binding site is contributed by N227. The segment at 230-250 (IALAQATKIMQRRINEEHMKN) is linker. The segment at 251–461 (GVSFIDPDTA…LPLSKDKEWE (211 aa)) is N-acetyltransferase. UDP-N-acetyl-alpha-D-glucosamine is bound by residues R332 and K350. The active-site Proton acceptor is the H362. Residues Y365 and N376 each contribute to the UDP-N-acetyl-alpha-D-glucosamine site. Acetyl-CoA contacts are provided by residues 385–386 (NY), A422, and R439.

In the N-terminal section; belongs to the N-acetylglucosamine-1-phosphate uridyltransferase family. It in the C-terminal section; belongs to the transferase hexapeptide repeat family. In terms of assembly, homotrimer. The cofactor is Mg(2+).

It localises to the cytoplasm. The enzyme catalyses alpha-D-glucosamine 1-phosphate + acetyl-CoA = N-acetyl-alpha-D-glucosamine 1-phosphate + CoA + H(+). It carries out the reaction N-acetyl-alpha-D-glucosamine 1-phosphate + UTP + H(+) = UDP-N-acetyl-alpha-D-glucosamine + diphosphate. The protein operates within nucleotide-sugar biosynthesis; UDP-N-acetyl-alpha-D-glucosamine biosynthesis; N-acetyl-alpha-D-glucosamine 1-phosphate from alpha-D-glucosamine 6-phosphate (route II): step 2/2. Its pathway is nucleotide-sugar biosynthesis; UDP-N-acetyl-alpha-D-glucosamine biosynthesis; UDP-N-acetyl-alpha-D-glucosamine from N-acetyl-alpha-D-glucosamine 1-phosphate: step 1/1. It functions in the pathway bacterial outer membrane biogenesis; LPS lipid A biosynthesis. In terms of biological role, catalyzes the last two sequential reactions in the de novo biosynthetic pathway for UDP-N-acetylglucosamine (UDP-GlcNAc). The C-terminal domain catalyzes the transfer of acetyl group from acetyl coenzyme A to glucosamine-1-phosphate (GlcN-1-P) to produce N-acetylglucosamine-1-phosphate (GlcNAc-1-P), which is converted into UDP-GlcNAc by the transfer of uridine 5-monophosphate (from uridine 5-triphosphate), a reaction catalyzed by the N-terminal domain. The chain is Bifunctional protein GlmU from Lactobacillus gasseri (strain ATCC 33323 / DSM 20243 / BCRC 14619 / CIP 102991 / JCM 1131 / KCTC 3163 / NCIMB 11718 / NCTC 13722 / AM63).